The primary structure comprises 1563 residues: MAESSSNPTRINILGKDNIIIDHGIWLNFVAQDLLQNIKSSTYILITDTNLYATYVPSFQSVFEKAAPQDVRLLTYAIPPGEYSKGRDTKAEIEDWMLSHQCTRDTVIIALGGGVIGDMIGYVAATFMRGVRFVQVPTTLLAMVDSSIGGKTAIDVPMGKNLIGAFWQPERIYIDLTFLNTLPVREFINGMAEVIKTAAIWDESEFTTLEENAKAILEAVRSKNKSADRLAPIRDILKRIVLGSARVKAEVVSSDEREGGLRNLLNFGHSIGHAYEAILTPQVLHGEAVAIGMVKEAELARFLGVLKPSAVARLTKCIASYDLPTSLQDKRIVKLTAGKECPVDVLLQKMAVDKKNEGRKKKIVLLSAIGKTYEPKASVVEDRAIRIVLTPCIRVHAGVPKDLKVSVTPPGSKSISNRALTLAALGEGTTRIYNLLHSDDTQVMLNAVAQLQGASFSWEDSDVLVVKGNGGRLQATSTPLYLGNAGTASRFLTSVVALCNPTDVNSTVLTGNARMKQRPIGALVDALRANGVGVKYLEKEHSLPVQVDAAGGLAGGVMELAATISSQYVSSLLMAAPYAREPVTLRLVGGKPISQPYIDMTIAMMASFGVQVQRSAEDPNTYHIPQGTYKNPETYIVESDASSATYPLAVAAITGTTCTVPNIGSKSLQGDARFAIEVLRPMGCTVEQTDASTTVTGPPVGTLKAIPHVDMEPMTDAFLTASVLAAVASGTTQITGIANQRVKECNRIKAMKDELAKFGVTCNELEDGIEVTGIPYTELKNPTEGIYCYDDHRVAMSFGVLSTISPHPVLILERECTGKTWPGWWDTMSNYFKSHLEGEEEPHSSHVSHEKPRKGNPKSIFIIGMRGAGKSTAGKWMSEVLNRPLIDLDHELERREGQTIPEIIRSERGWEGFRKAELDLLEDVIKNNPTGHIFSCGGGIVESEAARKLLISYSQNGGIVLLVHRDTDQVVEYLMRDKTRPAYSENIREVYYRRKPWFEECSNFRYYSPHPDGSKALTEPPFDFSQFLSVICGHSNHLEEAKKKPQSSFVSLTVPNVSKALDIIPKVVVGSDAVELRVDLLEDYDPEFVAKQVALLRSAARIPIVYTVRTVSQGGKFPDDDYALALKLYRTGLQAGVEYLDLEMTMPDEVIEAVTNEKGYTHIIASHHDPKATLSWKNGGWIQYYNKALQHGDVVKLVGVARELSDNFALARFKASLAAAHDKPFIGLNMGTAGKLSRVLNGFLTPVSHPALPSKAAPGQLSAAEIRQALALIGELEPRSFYLFGKPISASRSPALHNALFRDNGLPHQYSLFETDNAADVKELIRATDFGGASVTIPLKLDIMPLLDEVSDAAKVIGAVNTIIPVGSGDKVTLRGDNTDWMGMVYALRNAGVVKVSKESPAAGMVVGSGGTTRAAVYALHDLGFAPIYVVARNADRIKALAESFPADYDIRSLSTPEEVAAESTAQPSVVISTIPADKPIEQSMREVLVASLRHPSVTNGKHVLLEMAYTPRHTPLMQLAEDAHWQTIPGLEVLAAQGWYQFQLWTGITPIYTDAQAAVMGN.

Positions 1 to 382 are 3-dehydroquinate synthase; it reads MAESSSNPTR…YEPKASVVED (382 aa). Residues 48–50, 82–85, 113–115, and D118 each bind NAD(+); these read DTN, EYSK, and GGV. R129 contacts 7-phospho-2-dehydro-3-deoxy-D-arabino-heptonate. 138-139 is an NAD(+) binding site; sequence TT. Positions 145 and 151 each coordinate 7-phospho-2-dehydro-3-deoxy-D-arabino-heptonate. K160 serves as a coordination point for NAD(+). N161 contributes to the 7-phospho-2-dehydro-3-deoxy-D-arabino-heptonate binding site. Residues 178–181 and N189 each bind NAD(+); that span reads FLNT. E193 contacts Zn(2+). Residues 193–196 and K248 contribute to the 7-phospho-2-dehydro-3-deoxy-D-arabino-heptonate site; that span reads EVIK. E258 functions as the Proton acceptor; for 3-dehydroquinate synthase activity in the catalytic mechanism. 7-phospho-2-dehydro-3-deoxy-D-arabino-heptonate contacts are provided by residues 262–266 and H269; that span reads RNLLN. H269 is a Zn(2+) binding site. H273 serves as the catalytic Proton acceptor; for 3-dehydroquinate synthase activity. Residues H285 and K354 each contribute to the 7-phospho-2-dehydro-3-deoxy-D-arabino-heptonate site. H285 is a binding site for Zn(2+). Residues 395–834 form an EPSP synthase region; it reads VHAGVPKDLK…WDTMSNYFKS (440 aa). The For EPSP synthase activity role is filled by C816. Residues 836-850 show a composition bias toward basic and acidic residues; the sequence is LEGEEEPHSSHVSHE. A disordered region spans residues 836-857; sequence LEGEEEPHSSHVSHEKPRKGNP. The tract at residues 857–1051 is shikimate kinase; sequence PKSIFIIGMR…KKKPQSSFVS (195 aa). Residue 864–871 participates in ATP binding; the sequence is GMRGAGKS. The segment at 1052 to 1265 is 3-dehydroquinase; it reads LTVPNVSKAL…AAPGQLSAAE (214 aa). The active-site Proton acceptor; for 3-dehydroquinate dehydratase activity is H1168. The active-site Schiff-base intermediate with substrate; for 3-dehydroquinate dehydratase activity is K1196. The segment at 1278–1563 is shikimate dehydrogenase; it reads PRSFYLFGKP…TDAQAAVMGN (286 aa).

The protein in the N-terminal section; belongs to the sugar phosphate cyclases superfamily. Dehydroquinate synthase family. In the 2nd section; belongs to the EPSP synthase family. This sequence in the 3rd section; belongs to the shikimate kinase family. It in the 4th section; belongs to the type-I 3-dehydroquinase family. The protein in the C-terminal section; belongs to the shikimate dehydrogenase family. Homodimer. Zn(2+) serves as cofactor.

Its subcellular location is the cytoplasm. It catalyses the reaction 7-phospho-2-dehydro-3-deoxy-D-arabino-heptonate = 3-dehydroquinate + phosphate. It carries out the reaction 3-dehydroquinate = 3-dehydroshikimate + H2O. The enzyme catalyses shikimate + NADP(+) = 3-dehydroshikimate + NADPH + H(+). The catalysed reaction is shikimate + ATP = 3-phosphoshikimate + ADP + H(+). It catalyses the reaction 3-phosphoshikimate + phosphoenolpyruvate = 5-O-(1-carboxyvinyl)-3-phosphoshikimate + phosphate. It participates in metabolic intermediate biosynthesis; chorismate biosynthesis; chorismate from D-erythrose 4-phosphate and phosphoenolpyruvate: step 2/7. The protein operates within metabolic intermediate biosynthesis; chorismate biosynthesis; chorismate from D-erythrose 4-phosphate and phosphoenolpyruvate: step 3/7. It functions in the pathway metabolic intermediate biosynthesis; chorismate biosynthesis; chorismate from D-erythrose 4-phosphate and phosphoenolpyruvate: step 4/7. Its pathway is metabolic intermediate biosynthesis; chorismate biosynthesis; chorismate from D-erythrose 4-phosphate and phosphoenolpyruvate: step 5/7. It participates in metabolic intermediate biosynthesis; chorismate biosynthesis; chorismate from D-erythrose 4-phosphate and phosphoenolpyruvate: step 6/7. The AROM polypeptide catalyzes 5 consecutive enzymatic reactions in prechorismate polyaromatic amino acid biosynthesis. The sequence is that of Pentafunctional AROM polypeptide from Sordaria macrospora (strain ATCC MYA-333 / DSM 997 / K(L3346) / K-hell).